We begin with the raw amino-acid sequence, 1012 residues long: PHD finger protein 20 (1012 aa).

2 Tudor domains span residues 4–69 and 83–147; these read HPPN…RPLE and GSSE…GNAR. Positions 142 to 336 are disordered; it reads IVGNARPKET…RSSRLSTNGT (195 aa). A compositionally biased stretch (basic and acidic residues) spans 147-245; the sequence is RPKETDHKSL…QVDKKPENDI (99 aa). Phosphoserine is present on Ser159. A DNA-binding region (a.T hook) is located at residues 257 to 269; sequence KRKRGRPPSIAPT. Residues 271–280 show a composition bias toward polar residues; sequence VDSNSQTLQP. Over residues 297 to 325 the composition is skewed to basic and acidic residues; it reads PLKRPRLDKNSSQEKSKNYSENTDKDLSR. The C2H2-type zinc finger occupies 452 to 477; sequence FRCKVVDCLKFFRKAKLLHYHMKYFH. Residues 481–490 show a composition bias toward basic and acidic residues; sequence KSLEPEESPG. Positions 481–611 are disordered; the sequence is KSLEPEESPG…KGKVKALEED (131 aa). Phosphoserine is present on Ser488. Over residues 497–509 the composition is skewed to polar residues; sequence RGPSASDKPSQET. The span at 522 to 538 shows a compositional bias: basic and acidic residues; it reads TKDKEKNKEKKFKEFVR. The span at 539-551 shows a compositional bias: basic residues; that stretch reads VKPKKKKKKKKKT. The PHD-type zinc finger occupies 654-700; sequence RCICEVQEENDFMIQCEECQCWQHGVCMGLLEENVPEKYTCYVCQDP. Lys843 carries the N6-acetyllysine modification. The tract at residues 866 to 912 is disordered; sequence DAVNPLHENGDDSLSPRLGWPLDQDRSKGDSDPKPGSPKVKEYVSKK. Phosphoserine is present on residues Ser878 and Ser880. Residues 888 to 912 are compositionally biased toward basic and acidic residues; the sequence is DQDRSKGDSDPKPGSPKVKEYVSKK.

As to quaternary structure, homodimer; disulfide-linked. Component of some MLL1/MLL complex, at least composed of the core components KMT2A/MLL1, ASH2L, HCFC1, WDR5 and RBBP5, as well as the facultative components BACC1, CHD8, E2F6, HSP70, INO80C, KANSL1, LAS1L, MAX, MCRS1, MGA, KAT8/MOF, PELP1, PHF20, PRP31, RING2, RUVB1/TIP49A, RUVB2/TIP49B, SENP3, TAF1, TAF4, TAF6, TAF7, TAF9 and TEX10. Component of the NSL complex at least composed of MOF/KAT8, KANSL1, KANSL2, KANSL3, MCRS1, PHF20, OGT1/OGT, WDR5 and HCFC1. Ubiquitinated by TRIM26; leading to proteasomal degradation. As to expression, expressed in heart, kidney, liver, lung, pancreas, placenta, spleen and testis. Not expressed in brain, skeletal muscle, colon, ovary, prostate, small intestine and thymus. Expressed in colon and ovary cancer cell lines while it is not expressed in the respective normal tissues.

The protein resides in the nucleus. Methyllysine-binding protein, component of the MOF histone acetyltransferase protein complex. Not required for maintaining the global histone H4 'Lys-16' acetylation (H4K16ac) levels or locus specific histone acetylation, but instead works downstream in transcriptional regulation of MOF target genes. As part of the NSL complex it may be involved in acetylation of nucleosomal histone H4 on several lysine residues. Contributes to methyllysine-dependent p53/TP53 stabilization and up-regulation after DNA damage. The polypeptide is PHD finger protein 20 (PHF20) (Homo sapiens (Human)).